The following is a 619-amino-acid chain: Pentatricopeptide repeat-containing protein At1g68980, mitochondrial (619 aa).

A mitochondrion-targeting transit peptide spans 1–100; sequence MLRKTLTLIS…RAFVSTTYVI (100 aa). PPR repeat units follow at residues 186 to 221, 222 to 256, 257 to 292, 295 to 329, 366 to 400, 401 to 435, 436 to 466, 472 to 506, 507 to 541, and 542 to 576; these read DLVA…GVKP, DELS…GFAS, RRIL…GEAS, SEET…ESMS, GIGV…GLQL, DVET…RVAD, LKRC…VMED, KSHD…QYEP, NNQT…KAKL, and EHAL…KIFV.

This sequence belongs to the PPR family. P subfamily.

The protein localises to the mitochondrion. This chain is Pentatricopeptide repeat-containing protein At1g68980, mitochondrial, found in Arabidopsis thaliana (Mouse-ear cress).